The following is a 471-amino-acid chain: Probable ribonuclease FAU-1 (471 aa).

Belongs to the FAU-1 family.

Functionally, probable RNase involved in rRNA stability through maturation and/or degradation of precursor rRNAs. Preferentially cleaves UA sequences in the 5' precursor region of 5S rRNA. Binds to RNA in loop regions with AU-rich sequences. The protein is Probable ribonuclease FAU-1 of Thermococcus kodakarensis (strain ATCC BAA-918 / JCM 12380 / KOD1) (Pyrococcus kodakaraensis (strain KOD1)).